The primary structure comprises 254 residues: Insulin-like growth factor-binding protein 4 (254 aa).

A signal peptide spans 1–21 (MLPFGLVAALLLAAGPRPSLG). An IGFBP N-terminal domain is found at 23-103 (EAIHCPPCSE…MHGQGVCTEL (81 aa)). 6 cysteine pairs are disulfide-bonded: cysteine 27–cysteine 53, cysteine 30–cysteine 55, cysteine 38–cysteine 56, cysteine 44–cysteine 59, cysteine 67–cysteine 80, and cysteine 74–cysteine 100. A glycan (N-linked (GlcNAc...) asparagine) is linked at asparagine 125. A disulfide bond links cysteine 131 and cysteine 138. A disordered region spans residues 149–169 (RSKMKVVGTPREEPRPVPQGS). Residues 167–245 (QGSCQSELHR…GLEPKGELDC (79 aa)) enclose the Thyroglobulin type-1 domain. Intrachain disulfides connect cysteine 170-cysteine 200, cysteine 211-cysteine 222, and cysteine 224-cysteine 245. Phosphoserine is present on serine 251.

Binds IGF2 more than IGF1.

It is found in the secreted. In terms of biological role, IGF-binding proteins prolong the half-life of the IGFs and have been shown to either inhibit or stimulate the growth promoting effects of the IGFs on cell culture. They alter the interaction of IGFs with their cell surface receptors. This Rattus norvegicus (Rat) protein is Insulin-like growth factor-binding protein 4 (Igfbp4).